The primary structure comprises 184 residues: Ribosome-recycling factor (184 aa).

Basic and acidic residues predominate over residues 133 to 162 (RDGMDNLKQDENKKEISEDERKRHETEVQK). The segment at 133–163 (RDGMDNLKQDENKKEISEDERKRHETEVQKL) is disordered.

It belongs to the RRF family.

The protein resides in the cytoplasm. In terms of biological role, responsible for the release of ribosomes from messenger RNA at the termination of protein biosynthesis. May increase the efficiency of translation by recycling ribosomes from one round of translation to another. This Sphingopyxis alaskensis (strain DSM 13593 / LMG 18877 / RB2256) (Sphingomonas alaskensis) protein is Ribosome-recycling factor.